Reading from the N-terminus, the 323-residue chain is Sphingolipid delta(4)-desaturase/C4-monooxygenase DES2 (323 aa).

Glycine 2 carries N-myristoyl glycine lipidation. 2 consecutive transmembrane segments (helical) span residues 45–65 and 68–88; these read WTVT…QGLA and WLFF…TLAI. Residues 89 to 93 carry the Histidine box-1 motif; the sequence is HDISH. A required for C4-hydroxylase activity region spans residues 95–99; it reads TAFGT. The short motif at 128 to 132 is the Histidine box-2 element; it reads HVDHH. Residues 209–231 traverse the membrane as a helical segment; that stretch reads MVYLLASSLLGLGLHPISGHFVA. The short motif at 259-263 is the Histidine box-3 element; the sequence is HMEHH.

This sequence belongs to the fatty acid desaturase type 1 family. DEGS subfamily.

Its subcellular location is the endoplasmic reticulum membrane. It catalyses the reaction a dihydroceramide + 2 Fe(II)-[cytochrome b5] + O2 + 2 H(+) = a phytoceramide + 2 Fe(III)-[cytochrome b5] + H2O. It carries out the reaction an N-acylsphinganine + 2 Fe(II)-[cytochrome b5] + O2 + 2 H(+) = an N-acylsphing-4-enine + 2 Fe(III)-[cytochrome b5] + 2 H2O. The enzyme catalyses N-octanoylsphinganine + 2 Fe(II)-[cytochrome b5] + O2 + 2 H(+) = N-octanoyl-4-hydroxysphinganine + 2 Fe(III)-[cytochrome b5] + H2O. The catalysed reaction is an N-acylsphinganine + 2 Fe(II)-[cytochrome b5] + O2 + 2 H(+) = an N-acyl-(4R)-4-hydroxysphinganine + 2 Fe(III)-[cytochrome b5] + H2O. It functions in the pathway membrane lipid metabolism; sphingolipid biosynthesis. Functionally, bifunctional enzyme which acts both as a sphingolipid delta(4)-desaturase and a sphingolipid C4-monooxygenase. The polypeptide is Sphingolipid delta(4)-desaturase/C4-monooxygenase DES2 (Bos taurus (Bovine)).